Consider the following 131-residue polypeptide: Insulin-like 3 (131 aa).

A signal peptide spans 1-24 (MDPRLPAWALVLLGPALVFALGPA). 3 disulfide bridges follow: Cys-34–Cys-117, Cys-46–Cys-130, and Cys-116–Cys-121. A propeptide spans 58–104 (PVAAGDGELLQWLERRHLLYGLVANSEPAPGGPGLQPMPQTSHHHRH) (c peptide like). The interval 86–105 (APGGPGLQPMPQTSHHHRHR) is disordered.

This sequence belongs to the insulin family. As to quaternary structure, heterodimer of a B chain and an A chain linked by two disulfide bonds. Highest expression in the Leydig cells of the testis.

Its subcellular location is the secreted. In terms of biological role, seems to play a role in testicular function. May be a trophic hormone with a role in testicular descent in fetal life. Is a ligand for LGR8 receptor. The protein is Insulin-like 3 (INSL3) of Callithrix jacchus (White-tufted-ear marmoset).